The chain runs to 466 residues: Cysteine--tRNA ligase (466 aa).

Cysteine 29 lines the Zn(2+) pocket. The 'HIGH' region signature appears at 31 to 41; the sequence is PTVYNYIHIGN. Zn(2+) contacts are provided by cysteine 209, histidine 234, and glutamate 238. A 'KMSKS' region motif is present at residues 266–270; sequence KMSKS. Lysine 269 contributes to the ATP binding site. A Phosphoserine modification is found at serine 270.

It belongs to the class-I aminoacyl-tRNA synthetase family. As to quaternary structure, monomer. The cofactor is Zn(2+).

It is found in the cytoplasm. It carries out the reaction tRNA(Cys) + L-cysteine + ATP = L-cysteinyl-tRNA(Cys) + AMP + diphosphate. The sequence is that of Cysteine--tRNA ligase (cysS) from Halalkalibacterium halodurans (strain ATCC BAA-125 / DSM 18197 / FERM 7344 / JCM 9153 / C-125) (Bacillus halodurans).